The primary structure comprises 309 residues: HPr kinase/phosphorylase (309 aa).

Active-site residues include histidine 139 and lysine 160. 154-161 (GESGIGKS) serves as a coordination point for ATP. Serine 161 is a Mg(2+) binding site. Aspartate 178 functions as the Proton acceptor; for phosphorylation activity. Proton donor; for dephosphorylation activity in the catalytic mechanism. The interval 202–211 (IELRGIGIID) is important for the catalytic mechanism of both phosphorylation and dephosphorylation. Glutamate 203 is a Mg(2+) binding site. Residue arginine 244 is part of the active site. The important for the catalytic mechanism of dephosphorylation stretch occupies residues 265-270 (PIRPGR).

The protein belongs to the HPrK/P family. In terms of assembly, homohexamer. Mg(2+) serves as cofactor.

It catalyses the reaction [HPr protein]-L-serine + ATP = [HPr protein]-O-phospho-L-serine + ADP + H(+). The catalysed reaction is [HPr protein]-O-phospho-L-serine + phosphate + H(+) = [HPr protein]-L-serine + diphosphate. In terms of biological role, catalyzes the ATP- as well as the pyrophosphate-dependent phosphorylation of a specific serine residue in HPr, a phosphocarrier protein of the phosphoenolpyruvate-dependent sugar phosphotransferase system (PTS). HprK/P also catalyzes the pyrophosphate-producing, inorganic phosphate-dependent dephosphorylation (phosphorolysis) of seryl-phosphorylated HPr (P-Ser-HPr). The two antagonistic activities of HprK/P are regulated by several intracellular metabolites, which change their concentration in response to the absence or presence of rapidly metabolisable carbon sources (glucose, fructose, etc.) in the growth medium. Therefore, by controlling the phosphorylation state of HPr, HPrK/P is a sensor enzyme that plays a major role in the regulation of carbon metabolism and sugar transport: it mediates carbon catabolite repression (CCR), and regulates PTS-catalyzed carbohydrate uptake and inducer exclusion. This chain is HPr kinase/phosphorylase, found in Lachnoclostridium phytofermentans (strain ATCC 700394 / DSM 18823 / ISDg) (Clostridium phytofermentans).